A 678-amino-acid chain; its full sequence is THO complex subunit 5 homolog B (678 aa).

Disordered stretches follow at residues 1 to 37 (MSSD…EEAE) and 294 to 329 (ALFK…VQLD). The Nuclear localization signal signature appears at 7 to 10 (KKRK). Positions 14–37 (NRSEDGKRGRHDEQEGRYYSEEAE) are enriched in basic and acidic residues. The segment covering 301–314 (DSQDDESDSDAEEE) has biased composition (acidic residues).

It belongs to the THOC5 family. As to quaternary structure, component of the THO subcomplex, which is composed of thoc1, thoc2, thoc3, thoc5, thoc6 and thoc7. Component of the transcription/export (TREX) complex at least composed of alyref/thoc4, ddx39b, sarnp/cip29, chtop and the THO subcomplex. Interacts with thoc7.

The protein resides in the nucleus. It is found in the nucleus speckle. It localises to the cytoplasm. Its function is as follows. Component of the THO subcomplex of the TREX complex which is thought to couple mRNA transcription, processing and nuclear export, and which specifically associates with spliced mRNA and not with unspliced pre-mRNA. Plays a key structural role in the oligomerization of the THO-ddx39b complex. TREX is recruited to spliced mRNAs by a transcription-independent mechanism, binds to mRNA upstream of the exon-junction complex (EJC) and is recruited in a splicing- and cap-dependent manner to a region near the 5' end of the mRNA where it functions in mRNA export to the cytoplasm via the TAP/NXF1 pathway. May be involved in cell differentiation. This is THO complex subunit 5 homolog B (thoc5-b) from Xenopus laevis (African clawed frog).